Here is a 722-residue protein sequence, read N- to C-terminus: MTKLTTELLLKKGLPKCSHLKDLKKLNLSKMQLDLKDLDQKLFSQMVNLDELDISHNTLSDLPGNLRLHNLRILNFADNHVEDVTVLKQFPNLEEVIYEDNIYLTVSDNYKVFCLLPKLRRLNNKDITSLANHVRFVNHRELSNRVEAYWESKYKDKLPDKPPSQKINAVAKDFIKAVVDNVRYGPSSLKDFVRWKVEMIARNLIFSLSNDPKKDTDPVLQTSEDTAVENSSKKRESADECTEGSPTKRPRIQIDLQSMPLSPRKSSRLQNSPLCLTPTKRKQETSAQGTPSKFIETKSPKIALKTTPSKKHTNELSAKITGKPKLPLTPKKIHKALDNIEPLHFLQCHSKNNSCEDFKTQLWACAFEPNLDSSCPKAVATCGGDSICIIDCETGKVMKKYKVTGEEFFTLVWTTLTMIGKDGQKRKINVLAAGGKYGVVRMIHAKGSLCYGEIKAHKKAISIMCFSPKQETFLFTGSYDKRIILWDIGVPDCDYNFRPSQLLTLDTTSVPLRMCVVPSCPDEFLVAACEDGCFAWDIGLDKKQGRRSHEVEFNFPLYKEERKDKCFHIIDSLAFLNEDIIASKSVMQGSIYLWSWEKTLKSRKNKNVKKLDAVILSQMKWSSSETPYLVLSTSPERDCVFCGDEDGKIWIYDLDSCKADLQRGKLCSTVKEPTKILSWPLLCSQKEKTVDKTLINVVTVDPTMEYLVALTDINIVSIWKIQ.

LRR repeat units follow at residues 22–42 (DLKKLNLSKMQLDLKDLDQKL), 48–69 (NLDELDISHNTLSDLPGNLRLH), and 70–91 (NLRILNFADNHVEDVTVLKQFP). The segment at 211–292 (DPKKDTDPVL…QETSAQGTPS (82 aa)) is disordered. The span at 219–230 (VLQTSEDTAVEN) shows a compositional bias: polar residues. WD repeat units lie at residues 456-496 (AHKK…CDYN), 506-546 (DTTS…KQGR), 565-604 (KCFHIIDSLAFLNEDIIASKSVMQGSIYLWSWEKTLKSRK), 623-662 (SSETPYLVLSTSPERDCVFCGDEDGKIWIYDLDSCKADLQ), and 690-722 (VDKTLINVVTVDPTMEYLVALTDINIVSIWKIQ).

This sequence belongs to the LRWD1 family. Component of the ORC complex.

The protein localises to the nucleus. The protein resides in the chromosome. It localises to the centromere. Its subcellular location is the telomere. It is found in the cytoplasm. The protein localises to the cytoskeleton. The protein resides in the microtubule organizing center. It localises to the centrosome. Its subcellular location is the kinetochore. In terms of biological role, required for G1/S transition. Recruits and stabilizes the origin recognition complex (ORC) onto chromatin during G1 to establish pre-replication complex (preRC) and to heterochromatic sites in post-replicated cells. Binds a combination of DNA and histone methylation repressive marks on heterochromatin. Required for silencing of major satellite repeats. May be important ORC2, ORC3 and ORC4 stability. The polypeptide is Leucine-rich repeat and WD repeat-containing protein 1 (lrwd1) (Xenopus laevis (African clawed frog)).